Consider the following 366-residue polypeptide: S-adenosylmethionine:tRNA ribosyltransferase-isomerase (366 aa).

It belongs to the QueA family. As to quaternary structure, monomer.

The protein resides in the cytoplasm. It carries out the reaction 7-aminomethyl-7-carbaguanosine(34) in tRNA + S-adenosyl-L-methionine = epoxyqueuosine(34) in tRNA + adenine + L-methionine + 2 H(+). It functions in the pathway tRNA modification; tRNA-queuosine biosynthesis. In terms of biological role, transfers and isomerizes the ribose moiety from AdoMet to the 7-aminomethyl group of 7-deazaguanine (preQ1-tRNA) to give epoxyqueuosine (oQ-tRNA). The protein is S-adenosylmethionine:tRNA ribosyltransferase-isomerase of Parasynechococcus marenigrum (strain WH8102).